A 63-amino-acid polypeptide reads, in one-letter code: Large ribosomal subunit protein uL30 (63 aa).

The protein belongs to the universal ribosomal protein uL30 family. Part of the 50S ribosomal subunit.

The polypeptide is Large ribosomal subunit protein uL30 (Geobacillus stearothermophilus (Bacillus stearothermophilus)).